The sequence spans 408 residues: Serine/threonine-protein kinase ATG1t (408 aa).

One can recognise a Protein kinase domain in the interval 7 to 272 (YIAKSKLSES…GRIKNSRVWV (266 aa)). ATP contacts are provided by residues 13–21 (LSESLTSTV) and lysine 36. Aspartate 129 acts as the Proton acceptor in catalysis.

Belongs to the protein kinase superfamily. Ser/Thr protein kinase family.

The protein localises to the cytoplasmic vesicle. It is found in the autophagosome. Functionally, serine/threonine protein kinase involved in autophagy. The ATG1-ATG13 protein kinase complex regulates downstream events required for autophagosome enclosure and/or vacuolar delivery. This Arabidopsis thaliana (Mouse-ear cress) protein is Serine/threonine-protein kinase ATG1t.